A 279-amino-acid chain; its full sequence is Sarcosine/dimethylglycine N-methyltransferase (279 aa).

It belongs to the methyltransferase superfamily. In terms of assembly, monomer.

It catalyses the reaction sarcosine + 2 S-adenosyl-L-methionine = glycine betaine + 2 S-adenosyl-L-homocysteine + 2 H(+). It carries out the reaction sarcosine + S-adenosyl-L-methionine = N,N-dimethylglycine + S-adenosyl-L-homocysteine + H(+). The enzyme catalyses N,N-dimethylglycine + S-adenosyl-L-methionine = glycine betaine + S-adenosyl-L-homocysteine + H(+). It participates in amine and polyamine biosynthesis; betaine biosynthesis via glycine pathway; betaine from glycine: step 2/3. The protein operates within amine and polyamine biosynthesis; betaine biosynthesis via glycine pathway; betaine from glycine: step 3/3. With respect to regulation, p-chloromercuribenzoate acid inhibits 23% of the SDMT activities on sarcosine and dimethylglycine, and S-adenosylhomocysteine (AdoHcy) inhibits completely GSMT activities. In terms of biological role, catalyzes the methylation of sarcosine and dimethylglycine to dimethylglycine and betaine, respectively, with S-adenosylmethionine (AdoMet) acting as the methyl donor. It has strict specificity for sarcosine and dimethylglycine as the methyl group acceptors. This chain is Sarcosine/dimethylglycine N-methyltransferase, found in Halorhodospira halochloris (Ectothiorhodospira halochloris).